The primary structure comprises 299 residues: Regucalcin (299 aa).

Glu18 lines the a divalent metal cation pocket. Substrate-binding residues include Arg101, Asn103, and Glu121. Lys144 bears the N6-succinyllysine mark. Residues Asn154 and Asp204 each contribute to the a divalent metal cation site. Catalysis depends on Asp204, which acts as the Proton donor/acceptor. N6-succinyllysine occurs at positions 244 and 253. At Ser268 the chain carries Phosphoserine.

It belongs to the SMP-30/CGR1 family. In terms of assembly, monomer. Requires Zn(2+) as cofactor. Mn(2+) serves as cofactor. It depends on Ca(2+) as a cofactor. Mg(2+) is required as a cofactor. The cofactor is Co(2+). The N-terminus is blocked. In terms of tissue distribution, detected in liver (at protein level). Hepatocytes and renal proximal tubular epithelium.

The protein resides in the cytoplasm. The enzyme catalyses D-glucono-1,5-lactone + H2O = D-gluconate + H(+). It participates in cofactor biosynthesis; L-ascorbate biosynthesis via UDP-alpha-D-glucuronate pathway; L-ascorbate from UDP-alpha-D-glucuronate: step 3/4. Functionally, gluconolactonase with low activity towards other sugar lactones, including gulonolactone and galactonolactone. Catalyzes a key step in ascorbic acid (vitamin C) biosynthesis. Can also hydrolyze diisopropyl phosphorofluoridate and phenylacetate (in vitro). Calcium-binding protein. Modulates Ca(2+) signaling, and Ca(2+)-dependent cellular processes and enzyme activities. The sequence is that of Regucalcin (Rgn) from Rattus norvegicus (Rat).